The sequence spans 387 residues: Sulfoacetaldehyde reductase (387 aa).

Belongs to the iron-containing alcohol dehydrogenase family.

It carries out the reaction 2-hydroxyethane-1-sulfonate + NAD(+) = sulfoacetaldehyde + NADH + H(+). Its pathway is organosulfur degradation; alkanesulfonate degradation. Involved in an anaerobic respiration pathway that converts the sulfonate taurine (2-aminoethanesulfonate) to ammonia, acetate and sulfide. Catalyzes the NADH-dependent reduction of sulfoacetaldehyde to 2-hydroxyethane-1-sulfonate (isethionate). Does not accept acetaldehyde as a substrate. The chain is Sulfoacetaldehyde reductase from Bilophila wadsworthia (strain 3_1_6).